The following is a 556-amino-acid chain: Zinc finger protein 18 (556 aa).

Residues 41-123 (RQLFRQFRYQ…TLVESLKGEP (83 aa)) enclose the SCAN box domain. Positions 169 to 195 (QDLPLQNSSSATGELLSHGVKEESDME) are disordered. The region spanning 218–291 (ELGTAVLPPL…HLHGAEKMAR (74 aa)) is the KRAB domain. 5 C2H2-type zinc fingers span residues 415–437 (PTCR…QRTH), 443–465 (FHCH…QRTH), 471–493 (CKCD…EKIH), 499–521 (YKCP…QRVH), and 527–549 (YKCT…QRSH).

This sequence belongs to the krueppel C2H2-type zinc-finger protein family.

The protein resides in the nucleus. In terms of biological role, may be involved in transcriptional regulation. The sequence is that of Zinc finger protein 18 (Znf18) from Mus musculus (Mouse).